Consider the following 144-residue polypeptide: Neuritin-A (144 aa).

A signal peptide spans 1–27; sequence MGLKLSGRYIFLVLAVHLAYLLQAVKA. A lipid anchor (GPI-anchor amidated serine) is attached at Ser114. A propeptide spans 115–144 (removed in mature form); it reads AGAPGQRLLFPAFLPLLMVFLSTLFILVLQ.

The protein belongs to the neuritin family. Expressed in sensory regions of the brain including the visual, auditory and olfactory systems. Within the retina, only expressed in the retinal ganglion cells. Concentrated in axon tracts including retinal axons.

The protein resides in the cell membrane. Modulates postsynaptic dendritic arbor elaboration and synaptic maturation. The protein is Neuritin-A (nrn1-a) of Xenopus laevis (African clawed frog).